The following is a 544-amino-acid chain: Chaperonin GroEL (544 aa).

Residues 29-32 (TLGP), lysine 50, 86-90 (DGTTT), glycine 414, and aspartate 495 each bind ATP.

This sequence belongs to the chaperonin (HSP60) family. As to quaternary structure, forms a cylinder of 14 subunits composed of two heptameric rings stacked back-to-back. Interacts with the co-chaperonin GroES.

The protein localises to the cytoplasm. It catalyses the reaction ATP + H2O + a folded polypeptide = ADP + phosphate + an unfolded polypeptide.. Together with its co-chaperonin GroES, plays an essential role in assisting protein folding. The GroEL-GroES system forms a nano-cage that allows encapsulation of the non-native substrate proteins and provides a physical environment optimized to promote and accelerate protein folding. The protein is Chaperonin GroEL of Treponema pallidum subsp. pallidum (strain SS14).